The sequence spans 217 residues: MAAGDGDVKLSTLGSGGERGGDGSPGGAGATAARSSWVAALLATGGEMLLNVALVALVLLGAYRLWVRWGRRGLCSGPGAGEESPAATLPRMKKRDFSLEQLRQYDGARTPRILLAVNGKVFDVTKGSKFYGPAGPYGIFAGRDASRGLATFCLDKDALRDEYDDLSDLNAVQMESVREWEMQFKEKYDYVGRLLKPGEEPSEYTDEEDTKDHSKQD.

The O-linked (Xyl...) (chondroitin sulfate) serine glycan is linked to Ser-15. A helical transmembrane segment spans residues 40–62 (ALLATGGEMLLNVALVALVLLGA). Phosphoserine occurs at positions 84, 98, and 202. The Cytochrome b5 heme-binding domain occupies 96–195 (DFSLEQLRQY…EKYDYVGRLL (100 aa)). The segment at 196–217 (KPGEEPSEYTDEEDTKDHSKQD) is disordered. Acidic residues predominate over residues 200-209 (EPSEYTDEED). Phosphotyrosine is present on Tyr-204. Thr-205 carries the post-translational modification Phosphothreonine.

This sequence belongs to the cytochrome b5 family. MAPR subfamily. As to quaternary structure, interacts with PGRMC1. Interacts with AAAS.

It is found in the membrane. The protein resides in the nucleus envelope. It localises to the endoplasmic reticulum. The protein localises to the secreted. In terms of biological role, required for the maintenance of uterine histoarchitecture and normal female reproductive lifespan. May serve as a universal non-classical progesterone receptor in the uterus. Intracellular heme chaperone required for delivery of labile, or signaling heme, to the nucleus. Plays a role in adipocyte function and systemic glucose homeostasis. In brown fat, which has a high demand for heme, delivery of labile heme in the nucleus regulates the activity of heme-responsive transcriptional repressors such as NR1D1 and BACH1. The chain is Membrane-associated progesterone receptor component 2 from Rattus norvegicus (Rat).